Reading from the N-terminus, the 833-residue chain is MRVPLSWLREYVDLPATETGRDVQAKLVSAGLEVERVEQLGADLKGPLAVGQVLTIEELEGFKKPIRFCTVDVGQANGTGEPQEIVCGARNFSVGDKVVVVLPGAVLPGNFAIAARKTYGRTSHGMICSGDELGMGDDGSGGIIVLPPEYEVGTDAIELLELVDEVLDIAVTPDRGYCLSLRGIARETAIAYGLPLRDPALLDVPAPNAFGHPVKISEPLGCDRFTARTVTGLDPEARSPIWLQRRLQKAGMRSISLAVDITNYVMLELGQPLHAYDRSRIQGAIGVRRAEQGEKLTTLDGTQRTLDAEDLVITDDRGPIGLAGVMGGAHTEIDDTEGTTTEVVIEAAHFDPISVARTARRHKLASEASKRFERGVDPLAASAAAQRTVDLLVLLAGGSADAGVTEVITPSAPHTITIPANHPDRVAGVEYGRETVVRRLQEVGCDVYGQDELLVTVPSWRPDLTDPNDLAEEVIRLEGYENLPSTLPKPPAGRGLTERQRLHRRVGRALAGAGYVEAPNYPFIGEHVFDQFGLAADDPKRRVVKLVNPLSEEEPALRTTLLPGLLGALRRNDGRGSHDLALFETGLVFHPRAEQRIAVRLPVDRRPTDEEIASLTAALPEQPRHAAVVLAGAREQAGWWGKGRPADWADAVEAARTLAREAGTELLVRAGQYGPWHPGRCAELAVVLDGEEKVIGYAGELHPGVLKTLGLPARTSAMELNLDALEQASAGVVKGPRISTFPVATQDVALVVDKTVPHADVEAALREGAGELLESIRLFDVYESEQLGAGKKSLAYALRFRAADRTLTVEEASTARDAAVALAAERTGAALRS.

A tRNA-binding domain is found at 42-157 (ADLKGPLAVG…PEYEVGTDAI (116 aa)). One can recognise a B5 domain in the interval 411-485 (SAPHTITIPA…RLEGYENLPS (75 aa)). Mg(2+) is bound by residues Asp-463, Asp-469, Glu-472, and Glu-473. Positions 739 to 832 (STFPVATQDV…AAERTGAALR (94 aa)) constitute an FDX-ACB domain.

This sequence belongs to the phenylalanyl-tRNA synthetase beta subunit family. Type 1 subfamily. Tetramer of two alpha and two beta subunits. Requires Mg(2+) as cofactor.

The protein localises to the cytoplasm. It catalyses the reaction tRNA(Phe) + L-phenylalanine + ATP = L-phenylalanyl-tRNA(Phe) + AMP + diphosphate + H(+). The sequence is that of Phenylalanine--tRNA ligase beta subunit from Streptomyces avermitilis (strain ATCC 31267 / DSM 46492 / JCM 5070 / NBRC 14893 / NCIMB 12804 / NRRL 8165 / MA-4680).